The primary structure comprises 431 residues: Trigger factor (431 aa).

In terms of domain architecture, PPIase FKBP-type spans Glu160–Pro245.

It belongs to the FKBP-type PPIase family. Tig subfamily.

It localises to the cytoplasm. It carries out the reaction [protein]-peptidylproline (omega=180) = [protein]-peptidylproline (omega=0). In terms of biological role, involved in protein export. Acts as a chaperone by maintaining the newly synthesized protein in an open conformation. Functions as a peptidyl-prolyl cis-trans isomerase. The protein is Trigger factor of Actinobacillus succinogenes (strain ATCC 55618 / DSM 22257 / CCUG 43843 / 130Z).